Consider the following 110-residue polypeptide: Parvalbumin alpha (110 aa).

S2 is subject to N-acetylserine. 3 positions are modified to phosphoserine: S2, S8, and S24. 2 EF-hand domains span residues 39–74 (KNPD…FSSD) and 78–110 (LSAK…VAES). 11 residues coordinate Ca(2+): D52, D54, S56, F58, E60, E63, D91, D93, D95, K97, and E102.

As to expression, expressed in the modiolar nerve root (at protein level).

In terms of biological role, in muscle, parvalbumin is thought to be involved in relaxation after contraction. It binds two calcium ions. The polypeptide is Parvalbumin alpha (Pvalb) (Mus musculus (Mouse)).